Consider the following 200-residue polypeptide: 3-isopropylmalate dehydratase small subunit (200 aa).

It belongs to the LeuD family. LeuD type 1 subfamily. As to quaternary structure, heterodimer of LeuC and LeuD.

It carries out the reaction (2R,3S)-3-isopropylmalate = (2S)-2-isopropylmalate. Its pathway is amino-acid biosynthesis; L-leucine biosynthesis; L-leucine from 3-methyl-2-oxobutanoate: step 2/4. Its function is as follows. Catalyzes the isomerization between 2-isopropylmalate and 3-isopropylmalate, via the formation of 2-isopropylmaleate. This chain is 3-isopropylmalate dehydratase small subunit, found in Edwardsiella ictaluri (strain 93-146).